Reading from the N-terminus, the 164-residue chain is Interferon gamma (164 aa).

Residues 1-19 (MTCQTYNLFVLSVIMIYYG) form the signal peptide. Asn42 and Asn61 each carry an N-linked (GlcNAc...) asparagine glycan.

Belongs to the type II (or gamma) interferon family. Homodimer.

It is found in the secreted. Functionally, produced by lymphocytes activated by specific antigens or mitogens. IFN-gamma, in addition to having antiviral activity, has important immunoregulatory functions. It is a potent activator of macrophages, it has antiproliferative effects on transformed cells and it can potentiate the antiviral and antitumor effects of the type I interferons. The protein is Interferon gamma (IFNG) of Phasianus colchicus colchicus (Black-necked pheasant).